The primary structure comprises 373 residues: MSQNYYQILGVSKTASQADLKKAYLKLAKQYHPDTTDAKDAEKKFKAINAAYDVLKDEQKRAAYDRLGHDAFQNQQSRGGGGNHGGFHPDINDIFGDFFSDFMGGSRRSSRPTSAKVRGSDLKYNLTINLEEAFHGIEKNINFSSAVKCDTCHGSGSEKGETVTTCDACSGVGATRMQQGFFTIEQACHKCQGNGHIIKNPCKKCHGMGRYHKQRNLSVNIPAGVENGTRIRHTGEGEAGIRGGNSGDLYVDITIKPHDIYKVDGANLHCKLPISFVNAALGGEIEVPVIEGGKVSLTIPAGTQNGDQLRLRSKGMSKMRSTIRGDMLTHIHVEVPKNLSKRQRELLEEFKKESINEKENDGSFFNKMKSLWS.

The region spanning 4–68 (NYYQILGVSK…QKRAAYDRLG (65 aa)) is the J domain. The CR-type zinc-finger motif lies at 136–214 (GIEKNINFSS…CHGMGRYHKQ (79 aa)). Residues Cys-149, Cys-152, Cys-166, Cys-169, Cys-188, Cys-191, Cys-202, and Cys-205 each coordinate Zn(2+). CXXCXGXG motif repeat units lie at residues 149-156 (CDTCHGSG), 166-173 (CDACSGVG), 188-195 (CHKCQGNG), and 202-209 (CKKCHGMG).

Belongs to the DnaJ family. Homodimer. Zn(2+) serves as cofactor.

It is found in the cytoplasm. Participates actively in the response to hyperosmotic and heat shock by preventing the aggregation of stress-denatured proteins and by disaggregating proteins, also in an autonomous, DnaK-independent fashion. Unfolded proteins bind initially to DnaJ; upon interaction with the DnaJ-bound protein, DnaK hydrolyzes its bound ATP, resulting in the formation of a stable complex. GrpE releases ADP from DnaK; ATP binding to DnaK triggers the release of the substrate protein, thus completing the reaction cycle. Several rounds of ATP-dependent interactions between DnaJ, DnaK and GrpE are required for fully efficient folding. Also involved, together with DnaK and GrpE, in the DNA replication of plasmids through activation of initiation proteins. The sequence is that of Chaperone protein DnaJ from Rickettsia rickettsii (strain Iowa).